The sequence spans 143 residues: Transcription antitermination protein NusB (143 aa).

This sequence belongs to the NusB family.

Its function is as follows. Involved in transcription antitermination. Required for transcription of ribosomal RNA (rRNA) genes. Binds specifically to the boxA antiterminator sequence of the ribosomal RNA (rrn) operons. This is Transcription antitermination protein NusB from Clostridium botulinum (strain ATCC 19397 / Type A).